The chain runs to 119 residues: U-scoloptoxin(16)-Er11a (119 aa).

Residues Met-1 to Ser-19 form the signal peptide.

This sequence belongs to the scoloptoxin-16 family. Post-translationally, contains 4 disulfide bonds. Expressed by the venom gland.

It is found in the secreted. This chain is U-scoloptoxin(16)-Er11a, found in Ethmostigmus rubripes (Giant centipede).